Consider the following 306-residue polypeptide: uncharacterized protein (306 aa).

This is an uncharacterized protein from Treponema pallidum (strain Nichols).